The following is a 177-amino-acid chain: uncharacterized protein (177 aa).

Its subcellular location is the plastid. The protein resides in the chloroplast. This is an uncharacterized protein from Chlorella vulgaris (Green alga).